A 532-amino-acid polypeptide reads, in one-letter code: Putative L-lactate permease (532 aa).

The next 14 helical transmembrane spans lie at 23–43, 56–76, 101–121, 129–149, 152–172, 180–200, 213–233, 234–254, 274–294, 346–366, 387–407, 420–440, 462–482, and 508–528; these read ALPS…VHLL, VVSA…AILF, VAQL…ASGF, APIL…ALIM, VPVS…ALKL, IGSI…LLAL, IVFI…IAQV, NYEF…VWAA, AGEV…LIVT, LLYV…IPFF, PFIA…GGEH, ISGS…SFFS, GISV…GNMV, and IIPM…LVPL.

This sequence belongs to the lactate permease family.

It is found in the cell inner membrane. Functionally, may play a role in L-lactate transport. The sequence is that of Putative L-lactate permease from Haemophilus influenzae (strain ATCC 51907 / DSM 11121 / KW20 / Rd).